The primary structure comprises 144 residues: Bacilliredoxin BCE_4227 (144 aa).

The protein belongs to the bacilliredoxin family.

The chain is Bacilliredoxin BCE_4227 from Bacillus cereus (strain ATCC 10987 / NRS 248).